Consider the following 388-residue polypeptide: MYKAQYLWLFGLVLISRSATERTTPKINFTTVVGLKTTPAMRSSSASSLGGSLPMVINTWNFTDANFLAWRILNVTQGGLRQTRNAVVEGCTRCEQQQCDRTVGYGGSPDELGETTLDAMIMDGSSMDVGAVAGLRGIKDAIRVARHVLEHTKHSILVGDLASQFAQAMGFRSESLATPESKAMWMEWTAANCQPNFWRNVHPDPSISCGPYKPKATPLTRWKEDRARTEYSIGHLNHDTIGMIAIDAANNIHAGTSSNGARHKIPGRVGDSPIPGAGAYADNEVGAAVATGDGDIMMRFLPTLLAVEAMRAGKKPAEAAEVGIRRISKHYKDFSGAVIAVDRLGQYGAACYGMTEFPFVVSNPSKTDIPSRQESVKCITGKEAVNVV.

Residues 1–20 form the signal peptide; that stretch reads MYKAQYLWLFGLVLISRSAT. Disulfide bonds link cysteine 94/cysteine 99 and cysteine 193/cysteine 209. Threonine 240 (nucleophile) is an active-site residue. Substrate is bound by residues 268–271 and 291–294; these read RVGD and TGDG. The cysteines at positions 351 and 378 are disulfide-linked.

It belongs to the Ntn-hydrolase family. In terms of assembly, heterotetramer of two alpha and two beta chains arranged as a dimer of alpha/beta heterodimers. In terms of processing, cleaved into an alpha and beta chain by autocatalysis; this activates the enzyme. The N-terminal residue of the beta subunit is responsible for the nucleophile hydrolase activity.

It catalyses the reaction N(4)-(beta-N-acetyl-D-glucosaminyl)-L-asparagine + H2O = N-acetyl-beta-D-glucosaminylamine + L-aspartate + H(+). Functionally, cleaves the GlcNAc-Asn bond which joins oligosaccharides to the peptide of asparagine-linked glycoproteins. The polypeptide is Putative N(4)-(beta-N-acetylglucosaminyl)-L-asparaginase GL17147 (Drosophila persimilis (Fruit fly)).